The primary structure comprises 221 residues: Serine/arginine-rich splicing factor 2 (221 aa).

Ser-2 carries the N-acetylserine modification. At Ser-2 the chain carries Phosphoserine. One can recognise an RRM domain in the interval 14–92 (TSLKVDNLTY…RELRVQMARY (79 aa)). Phosphothreonine is present on residues Thr-22 and Thr-25. Position 26 is a phosphoserine (Ser-26). Lys-52 is modified (N6-acetyllysine). Residues 92-221 (YGRPPDSHHS…SPEEEGAVSS (130 aa)) are disordered. Composition is skewed to basic residues over residues 117–171 (RRSR…RSKS) and 179–189 (SRSRSRSRSRS). Ser-189, Ser-191, Ser-204, Ser-206, Ser-208, Ser-212, and Ser-220 each carry phosphoserine.

Belongs to the splicing factor SR family. In terms of assembly, in vitro, self-associates and binds SRSF1/SFRS1 (ASF/SF2), SNRNP70 and U2AF1 but not U2AF2. Binds SREK1/SFRS12. Interacts with CCNL1 and CCNL2. Interacts with SCAF11. Interacts with ZRSR2/U2AF1-RS2. Interacts with CCDC55 (via C-terminus). Interacts with BRDT. In terms of processing, extensively phosphorylated on serine residues in the RS domain. Phosphorylated by SRPK2 and this causes its redistribution from the nuclear speckle to nucleoplasm and controls cell fate decision in response to cisplatin treatment. KAT5/TIP60 inhibits its phosphorylation by preventing SRPK2 nuclear translocation. Acetylation on Lys-52 by KAT5/TIP60 promotes its proteasomal degradation. This effect is counterbalanced by HDAC6, which positively controls SRSF2 protein level by deacetylating it and preventing its proteasomal degradation.

Its subcellular location is the nucleus. The protein resides in the nucleoplasm. It localises to the nucleus speckle. In terms of biological role, necessary for the splicing of pre-mRNA. It is required for formation of the earliest ATP-dependent splicing complex and interacts with spliceosomal components bound to both the 5'- and 3'-splice sites during spliceosome assembly. It also is required for ATP-dependent interactions of both U1 and U2 snRNPs with pre-mRNA. Interacts with other spliceosomal components, via the RS domains, to form a bridge between the 5'- and 3'-splice site binding components, U1 snRNP and U2AF. Binds to purine-rich RNA sequences, either 5'-AGSAGAGTA-3' (S=C or G) or 5'-GTTCGAGTA-3'. Can bind to beta-globin mRNA and commit it to the splicing pathway. The phosphorylated form (by SRPK2) is required for cellular apoptosis in response to cisplatin treatment. The protein is Serine/arginine-rich splicing factor 2 (SRSF2) of Sus scrofa (Pig).